Consider the following 422-residue polypeptide: Mitogen-activated protein kinase spm1 (422 aa).

One can recognise a Protein kinase domain in the interval F21–L314. Residues L27–V35 and K52 each bind ATP. D149 serves as the catalytic Proton acceptor. T186 is modified (phosphothreonine). The TXY motif lies at T186–Y188. Y188 carries the phosphotyrosine modification. The disordered stretch occupies residues R359–N422. Polar residues predominate over residues P364–P379. The span at S380–S397 shows a compositional bias: low complexity. A compositionally biased stretch (basic and acidic residues) spans A411–N422.

Belongs to the protein kinase superfamily. CMGC Ser/Thr protein kinase family. MAP kinase subfamily. The cofactor is Mg(2+). In terms of processing, dually phosphorylated on Thr-186 and Tyr-188, which activates the enzyme.

The enzyme catalyses L-seryl-[protein] + ATP = O-phospho-L-seryl-[protein] + ADP + H(+). It carries out the reaction L-threonyl-[protein] + ATP = O-phospho-L-threonyl-[protein] + ADP + H(+). With respect to regulation, activated by tyrosine and threonine phosphorylation by skh1/pek1. Regulates cell integrity and functions coordinately with the protein kinase C pathway (pck1 and pck2). Involved the regulation of wall architecture, cell shape, cytokinesis in exponential and stationary phase, and metabolism of ions. The polypeptide is Mitogen-activated protein kinase spm1 (spm1) (Schizosaccharomyces pombe (strain 972 / ATCC 24843) (Fission yeast)).